The chain runs to 46 residues: Acetylajmalan esterase (46 aa).

Asparagine 39 carries an N-linked (GlcNAc...) asparagine glycan.

It belongs to the 'GDSL' lipolytic enzyme family.

The catalysed reaction is 17-O-acetylajmaline + H2O = ajmaline + acetate + H(+). It catalyses the reaction 17-O-acetylnorajmaline + H2O = norajmaline + acetate + H(+). In terms of biological role, deacetylates 17-O-acetylajmaline and 17-O-acetylnorajmaline, but is inactive toward other acetylated alkaloids. The protein is Acetylajmalan esterase of Rauvolfia verticillata (Common devil-pepper).